The sequence spans 166 residues: Large ribosomal subunit protein uL10 (166 aa).

Belongs to the universal ribosomal protein uL10 family. As to quaternary structure, part of the ribosomal stalk of the 50S ribosomal subunit. The N-terminus interacts with L11 and the large rRNA to form the base of the stalk. The C-terminus forms an elongated spine to which L12 dimers bind in a sequential fashion forming a multimeric L10(L12)X complex.

Its function is as follows. Forms part of the ribosomal stalk, playing a central role in the interaction of the ribosome with GTP-bound translation factors. This is Large ribosomal subunit protein uL10 from Pseudomonas paraeruginosa (strain DSM 24068 / PA7) (Pseudomonas aeruginosa (strain PA7)).